The sequence spans 254 residues: Cyclin homolog (254 aa).

It belongs to the cyclin family. Cyclin D subfamily.

Its function is as follows. May be highly relevant to the process of cellular transformation and rapid T-cell proliferation effected by HVS during latent infections of T-cells in susceptible hosts. In Saimiriine herpesvirus 2 (strain 11) (SaHV-2), this protein is Cyclin homolog (72).